The primary structure comprises 378 residues: H repeat-associated putative transposase YhhI (378 aa).

This sequence belongs to the transposase 11 family.

The polypeptide is H repeat-associated putative transposase YhhI (yhhI) (Escherichia coli (strain K12)).